A 399-amino-acid chain; its full sequence is Immunoglobulin heavy constant gamma 1 (399 aa).

A disordered region spans residues 1–21 (ASTKGPSVFPLAPSSKSTSGG). The tract at residues 1–98 (ASTKGPSVFP…PSNTKVDKKV (98 aa)) is CH1. At 1–350 (ASTKGPSVFP…DGELDGLWTT (350 aa)) the chain is on the extracellular side. Ig-like domains follow at residues 6–99 (PSVF…KKVE), 121–220 (PSVF…KTIS), and 229–325 (PQVY…KSLS). Residues Cys-27 and Cys-83 are joined by a disulfide bond. The hinge stretch occupies residues 99-110 (EPKSCDKTHTCP). The segment at 111-223 (PCPAPELLGG…PIEKTISKAK (113 aa)) is CH2. Disulfide bonds link Cys-144–Cys-204 and Cys-250–Cys-308. An N-linked (GlcNAc...) (complex) asparagine glycan is attached at Asn-180. The segment at 224 to 330 (GQPREPQVYT…QKSLSLSPEL (107 aa)) is CH3. A helical membrane pass occupies residues 351–371 (ITIFITLFLLSVCYSATVTFF). Residues 372 to 399 (KVKWIFSSVVDLKQTIIPDYRNMIGQGA) lie on the Cytoplasmic side of the membrane.

In terms of assembly, immunoglobulins are composed of two identical heavy chains and two identical light chains; disulfide-linked. Interacts with FCGR1A; this interaction mediates IgG effector functions on monocytes. Interacts with FCGR2A and FCGR3A. Glycosylation on Asn-180 is required for interaction with Fc receptors and ability to activate the complement pathway. Post-translationally, (Microbial infection) Deglycosylation on Asn-180 by S.pyogenes EndoS or Endos2 endoglucosidases prevents interaction between immunoglobulin-gamma (IgG) and Fc receptors, impairing ability to activate the complement pathway.

The protein localises to the secreted. The protein resides in the cell membrane. In terms of biological role, constant region of immunoglobulin heavy chains. Immunoglobulins, also known as antibodies, are membrane-bound or secreted glycoproteins produced by B lymphocytes. In the recognition phase of humoral immunity, the membrane-bound immunoglobulins serve as receptors which, upon binding of a specific antigen, trigger the clonal expansion and differentiation of B lymphocytes into immunoglobulins-secreting plasma cells. Secreted immunoglobulins mediate the effector phase of humoral immunity, which results in the elimination of bound antigens. The antigen binding site is formed by the variable domain of one heavy chain, together with that of its associated light chain. Thus, each immunoglobulin has two antigen binding sites with remarkable affinity for a particular antigen. The variable domains are assembled by a process called V-(D)-J rearrangement and can then be subjected to somatic hypermutations which, after exposure to antigen and selection, allow affinity maturation for a particular antigen. Mediates IgG effector functions on monocytes triggering ADCC of virus-infected cells. The protein is Immunoglobulin heavy constant gamma 1 of Homo sapiens (Human).